Here is a 75-residue protein sequence, read N- to C-terminus: UPF0352 protein ASA_2693 (75 aa).

This sequence belongs to the UPF0352 family.

The sequence is that of UPF0352 protein ASA_2693 from Aeromonas salmonicida (strain A449).